Here is a 762-residue protein sequence, read N- to C-terminus: Primary amine oxidase, lung isozyme (762 aa).

A signal peptide spans 1–16 (MFIFIFLSLWTLLVMG). A disordered region spans residues 23–54 (GSEEGVGKQCHPSLPPRCPSRSPSDQPWTHPD). N-linked (GlcNAc...) asparagine glycosylation occurs at Asn136. Residues Cys197 and Cys198 are joined by a disulfide bond. Residue Thr211 is glycosylated (O-linked (GalNAc...) threonine). Residues Asn231 and Asn293 are each glycosylated (N-linked (GlcNAc...) asparagine). 383 to 393 (YMDACFGMGKF) contacts substrate. The Proton acceptor role is filled by Asp385. The cysteines at positions 403 and 429 are disulfide-linked. Position 467-472 (467-472 (LLNYDY)) interacts with substrate. The Schiff-base intermediate with substrate; via topaquinone role is filled by Tyr470. Position 470 is a 2',4',5'-topaquinone (Tyr470). Cu cation is bound by residues His519 and His521. Ca(2+)-binding residues include Asp528, Leu529, Asp530, and Glu571. 577–584 (PLGGGSPR) is a binding site for heparin. A glycan (N-linked (GlcNAc...) asparagine) is linked at Asn617. 2 residues coordinate Ca(2+): Phe662 and Asn664. Asn665 carries an N-linked (GlcNAc...) asparagine glycan. Residues Glu666, Asp672, and Leu673 each coordinate Ca(2+). His683 provides a ligand contact to Cu cation. Cys733 and Cys740 are oxidised to a cystine.

This sequence belongs to the copper/topaquinone oxidase family. Homodimer; disulfide-linked. Cu cation is required as a cofactor. The cofactor is Ca(2+). Requires L-topaquinone as cofactor. In terms of processing, topaquinone (TPQ) is generated by copper-dependent autoxidation of a specific tyrosyl residue. Expressed in lung, spleen, heart and kidney.

The protein localises to the secreted. It localises to the extracellular space. It carries out the reaction a primary methyl amine + O2 + H2O = an aldehyde + H2O2 + NH4(+). This chain is Primary amine oxidase, lung isozyme, found in Bos taurus (Bovine).